Here is a 187-residue protein sequence, read N- to C-terminus: Adenylate kinase (187 aa).

10-15 provides a ligand contact to ATP; that stretch reads GSGKGT. The interval 30–59 is NMP; that stretch reads STGDLLRAEVAAGSPLGLKAKEVMARGDLV. AMP-binding positions include T31, R36, 57-59, 85-88, and Q92; these read DLV and GYPR. The segment at 126–136 is LID; it reads GRAKAEGREDD. R127 contacts ATP. AMP-binding residues include R133 and R144. ATP is bound at residue G172.

It belongs to the adenylate kinase family. Monomer.

Its subcellular location is the cytoplasm. The catalysed reaction is AMP + ATP = 2 ADP. The protein operates within purine metabolism; AMP biosynthesis via salvage pathway; AMP from ADP: step 1/1. Its function is as follows. Catalyzes the reversible transfer of the terminal phosphate group between ATP and AMP. Plays an important role in cellular energy homeostasis and in adenine nucleotide metabolism. The polypeptide is Adenylate kinase (Xanthomonas axonopodis pv. citri (strain 306)).